Consider the following 36-residue polypeptide: Beta/delta/mu-theraphotoxin-Pv1 (36 aa).

Intrachain disulfides connect Cys3–Cys17, Cys10–Cys22, and Cys16–Cys30. Residue Phe36 is modified to Phenylalanine amide.

It belongs to the neurotoxin 10 (Hwtx-1) family. In terms of tissue distribution, expressed by the venom gland.

It localises to the secreted. Functionally, gating-modifier toxin that targets voltage-gated sodium channels. Inhibits the inactivation of Nav1.7/SCN9A. The sequence is that of Beta/delta/mu-theraphotoxin-Pv1 from Poecilotheria vittata (Ghost ornamental tarantula).